Here is a 397-residue protein sequence, read N- to C-terminus: Acetate kinase 2 (397 aa).

Residue Asn10 coordinates Mg(2+). Lys17 is an ATP binding site. Arg90 contributes to the substrate binding site. Asp147 functions as the Proton donor/acceptor in the catalytic mechanism. Residues 207-211, 281-283, and 329-333 contribute to the ATP site; these read HLGNG, DAR, and GIGEN. Position 385 (Glu385) interacts with Mg(2+).

It belongs to the acetokinase family. As to quaternary structure, homodimer. It depends on Mg(2+) as a cofactor. Requires Mn(2+) as cofactor.

Its subcellular location is the cytoplasm. The enzyme catalyses acetate + ATP = acetyl phosphate + ADP. The protein operates within metabolic intermediate biosynthesis; acetyl-CoA biosynthesis; acetyl-CoA from acetate: step 1/2. Its function is as follows. Catalyzes the formation of acetyl phosphate from acetate and ATP. Can also catalyze the reverse reaction. This Vibrio parahaemolyticus serotype O3:K6 (strain RIMD 2210633) protein is Acetate kinase 2.